Reading from the N-terminus, the 158-residue chain is Ribosome maturation factor RimP (158 aa).

It belongs to the RimP family.

Its subcellular location is the cytoplasm. Its function is as follows. Required for maturation of 30S ribosomal subunits. This Lactobacillus delbrueckii subsp. bulgaricus (strain ATCC 11842 / DSM 20081 / BCRC 10696 / JCM 1002 / NBRC 13953 / NCIMB 11778 / NCTC 12712 / WDCM 00102 / Lb 14) protein is Ribosome maturation factor RimP.